The sequence spans 139 residues: Nucleoside diphosphate kinase (139 aa).

Residues K11, F59, R87, T93, R104, and N114 each contribute to the ATP site. The active-site Pros-phosphohistidine intermediate is the H117.

It belongs to the NDK family. In terms of assembly, homotetramer. Mg(2+) serves as cofactor.

It is found in the cytoplasm. It catalyses the reaction a 2'-deoxyribonucleoside 5'-diphosphate + ATP = a 2'-deoxyribonucleoside 5'-triphosphate + ADP. It carries out the reaction a ribonucleoside 5'-diphosphate + ATP = a ribonucleoside 5'-triphosphate + ADP. Major role in the synthesis of nucleoside triphosphates other than ATP. The ATP gamma phosphate is transferred to the NDP beta phosphate via a ping-pong mechanism, using a phosphorylated active-site intermediate. The sequence is that of Nucleoside diphosphate kinase from Wolbachia pipientis subsp. Culex pipiens (strain wPip).